The following is a 165-amino-acid chain: Lipoprotein signal peptidase (165 aa).

4 consecutive transmembrane segments (helical) span residues 7–27 (YFSS…LVLL), 46–66 (AVTS…FSFL), 72–92 (WQRY…IYLL), and 100–120 (LFCW…IDRV). Active-site residues include Asp-127 and Asp-145. Residues 136–156 (WHWPAFNIADSAICIGAVLFI) form a helical membrane-spanning segment.

This sequence belongs to the peptidase A8 family.

It is found in the cell inner membrane. It catalyses the reaction Release of signal peptides from bacterial membrane prolipoproteins. Hydrolyzes -Xaa-Yaa-Zaa-|-(S,diacylglyceryl)Cys-, in which Xaa is hydrophobic (preferably Leu), and Yaa (Ala or Ser) and Zaa (Gly or Ala) have small, neutral side chains.. It functions in the pathway protein modification; lipoprotein biosynthesis (signal peptide cleavage). Its function is as follows. This protein specifically catalyzes the removal of signal peptides from prolipoproteins. This chain is Lipoprotein signal peptidase, found in Janthinobacterium sp. (strain Marseille) (Minibacterium massiliensis).